The sequence spans 341 residues: tRNA N6-adenosine threonylcarbamoyltransferase (341 aa).

Residues histidine 115 and histidine 119 each coordinate Fe cation. Substrate contacts are provided by residues 138-142 (LVSGG), aspartate 171, glycine 184, and asparagine 276. Aspartate 304 is a Fe cation binding site.

This sequence belongs to the KAE1 / TsaD family. The cofactor is Fe(2+).

The protein localises to the cytoplasm. The enzyme catalyses L-threonylcarbamoyladenylate + adenosine(37) in tRNA = N(6)-L-threonylcarbamoyladenosine(37) in tRNA + AMP + H(+). Its function is as follows. Required for the formation of a threonylcarbamoyl group on adenosine at position 37 (t(6)A37) in tRNAs that read codons beginning with adenine. Is involved in the transfer of the threonylcarbamoyl moiety of threonylcarbamoyl-AMP (TC-AMP) to the N6 group of A37, together with TsaE and TsaB. TsaD likely plays a direct catalytic role in this reaction. This Stenotrophomonas maltophilia (strain R551-3) protein is tRNA N6-adenosine threonylcarbamoyltransferase.